The sequence spans 1435 residues: Gag-Pol polyprotein (1435 aa).

The N-myristoyl glycine; by host moiety is linked to residue Gly-2. The segment at 7–31 (VLSGGELDRWEKIRLRPGGKKKYKL) is interaction with Gp41. The tract at residues 8-43 (LSGGELDRWEKIRLRPGGKKKYKLKHIVWASRELER) is interaction with host CALM1. The interaction with host AP3D1 stretch occupies residues 12-19 (ELDRWEKI). The tract at residues 14–33 (DRWEKIRLRPGGKKKYKLKH) is interaction with membrane phosphatidylinositol 4,5-bisphosphate and RNA. Positions 16–22 (WEKIRLR) match the Nuclear export signal motif. A Nuclear localization signal motif is present at residues 26 to 32 (KKKYKLK). The segment at 73 to 77 (EELRS) is interaction with membrane phosphatidylinositol 4,5-bisphosphate. The disordered stretch occupies residues 106–128 (EEQNKSKKKAQQAAADTGHSNQV). A Phosphotyrosine; by host modification is found at Tyr-132. The interval 189–227 (NTVGGHQAAMQMLKETINEEAAEWDRVHPVHAGPIAPGQ) is interaction with host PPIA/CYPA and NUP153. A PPIA/CYPA-binding loop region spans residues 217 to 225 (PVHAGPIAP). A dimerization/Multimerization of capsid protein p24 region spans residues 277-363 (YSPTSILDIR…GGPGHKARVL (87 aa)). 2 CCHC-type zinc fingers span residues 390 to 407 (VKCFNCGKEGHTARNCRA) and 411 to 428 (KGCWKCGKEGHQMKDCTE). The disordered stretch occupies residues 448–481 (FSSEQTRANSPTRRELQVWGRDNNSPSEAGADRQ). The dimerization of protease stretch occupies residues 489–493 (PQVTL). In terms of domain architecture, Peptidase A2 spans 508-577 (KEALLDTGAD…TPVNIIGRNL (70 aa)). The active-site For protease activity; shared with dimeric partner is Asp-513. 2 dimerization of protease regions span residues 537–543 (GIGGFIK) and 576–588 (NLLTQIGCTLNFP). The Reverse transcriptase domain maps to 631–821 (EGKISKIGPE…PPFLWMGYEL (191 aa)). The Mg(2+) site is built by Asp-697, Asp-772, and Asp-773. The segment at 814–822 (FLWMGYELH) is RT 'primer grip'. The Tryptophan repeat motif signature appears at 985–1001 (WETWWTEYWQATWIPEW). An RNase H type-1 domain is found at 1021-1144 (IVGAETFYVD…VDKLVSAGIR (124 aa)). Asp-1030, Glu-1065, Asp-1085, and Asp-1136 together coordinate Mg(2+). An Integrase-type zinc finger spans residues 1150-1191 (DGIDKAQDEHEKYHSNWRAMASDFNLPPVVAKEIVASCDKCQ). Residues His-1159, His-1163, Cys-1187, and Cys-1190 each contribute to the Zn(2+) site. The 151-residue stretch at 1201-1351 (VDCSPGIWQL…SAGERIVDII (151 aa)) folds into the Integrase catalytic domain. Residues Asp-1211, Asp-1263, and Glu-1299 each contribute to the Mg(2+) site. Residues 1370–1417 (FRVYYRDSRNPLWKGPAKLLWKGEGAVVIQDNSDIKVVPRRKAKIIRD) constitute a DNA-binding region (integrase-type).

In terms of assembly, homotrimer; further assembles as hexamers of trimers. Interacts with gp41 (via C-terminus). Interacts with host CALM1; this interaction induces a conformational change in the Matrix protein, triggering exposure of the myristate group. Interacts with host AP3D1; this interaction allows the polyprotein trafficking to multivesicular bodies during virus assembly. Part of the pre-integration complex (PIC) which is composed of viral genome, matrix protein, Vpr and integrase. Homodimer; the homodimer further multimerizes as homohexamers or homopentamers. Interacts with human PPIA/CYPA; this interaction stabilizes the capsid. Interacts with human NUP153. Interacts with host PDZD8; this interaction stabilizes the capsid. Interacts with monkey TRIM5; this interaction destabilizes the capsid. As to quaternary structure, homodimer, whose active site consists of two apposed aspartic acid residues. In terms of assembly, heterodimer of p66 RT and p51 RT (RT p66/p51). Heterodimerization of RT is essential for DNA polymerase activity. The overall folding of the subdomains is similar in p66 RT and p51 RT but the spatial arrangements of the subdomains are dramatically different. Homotetramer; may further associate as a homohexadecamer. Part of the pre-integration complex (PIC) which is composed of viral genome, matrix protein, Vpr and integrase. Interacts with human SMARCB1/INI1 and human PSIP1/LEDGF isoform 1. Interacts with human KPNA3; this interaction might play a role in nuclear import of the pre-. integration complex. Interacts with human NUP153; this interaction might play a role in nuclear import of the pre-integration complex. Mg(2+) is required as a cofactor. Post-translationally, specific enzymatic cleavages by the viral protease yield mature proteins. The protease is released by autocatalytic cleavage. The polyprotein is cleaved during and after budding, this process is termed maturation. Proteolytic cleavage of p66 RT removes the RNase H domain to yield the p51 RT subunit. Nucleocapsid protein p7 might be further cleaved after virus entry. In terms of processing, tyrosine phosphorylated presumably in the virion by a host kinase. Phosphorylation is apparently not a major regulator of membrane association. Phosphorylated possibly by host MAPK1; this phosphorylation is necessary for Pin1-mediated virion uncoating. Post-translationally, methylated by host PRMT6, impairing its function by reducing RNA annealing and the initiation of reverse transcription.

It localises to the host cell membrane. It is found in the host endosome. The protein resides in the host multivesicular body. The protein localises to the virion membrane. Its subcellular location is the host nucleus. It localises to the host cytoplasm. It is found in the virion. The catalysed reaction is Specific for a P1 residue that is hydrophobic, and P1' variable, but often Pro.. The enzyme catalyses Endohydrolysis of RNA in RNA/DNA hybrids. Three different cleavage modes: 1. sequence-specific internal cleavage of RNA. Human immunodeficiency virus type 1 and Moloney murine leukemia virus enzymes prefer to cleave the RNA strand one nucleotide away from the RNA-DNA junction. 2. RNA 5'-end directed cleavage 13-19 nucleotides from the RNA end. 3. DNA 3'-end directed cleavage 15-20 nucleotides away from the primer terminus.. It catalyses the reaction 3'-end directed exonucleolytic cleavage of viral RNA-DNA hybrid.. It carries out the reaction DNA(n) + a 2'-deoxyribonucleoside 5'-triphosphate = DNA(n+1) + diphosphate. Its activity is regulated as follows. Protease: The viral protease is inhibited by many synthetic protease inhibitors (PIs), such as amprenavir, atazanavir, indinavir, loprinavir, nelfinavir, ritonavir and saquinavir. Use of protease inhibitors in tritherapy regimens permit more ambitious therapeutic strategies. Reverse transcriptase/ribonuclease H: RT can be inhibited either by nucleoside RT inhibitors (NRTIs) or by non nucleoside RT inhibitors (NNRTIs). NRTIs act as chain terminators, whereas NNRTIs inhibit DNA polymerization by binding a small hydrophobic pocket near the RT active site and inducing an allosteric change in this region. Classical NRTIs are abacavir, adefovir (PMEA), didanosine (ddI), lamivudine (3TC), stavudine (d4T), tenofovir (PMPA), zalcitabine (ddC), and zidovudine (AZT). Classical NNRTIs are atevirdine (BHAP U-87201E), delavirdine, efavirenz (DMP-266), emivirine (I-EBU), and nevirapine (BI-RG-587). The tritherapies used as a basic effective treatment of AIDS associate two NRTIs and one NNRTI. Its function is as follows. Mediates, with Gag polyprotein, the essential events in virion assembly, including binding the plasma membrane, making the protein-protein interactions necessary to create spherical particles, recruiting the viral Env proteins, and packaging the genomic RNA via direct interactions with the RNA packaging sequence (Psi). Gag-Pol polyprotein may regulate its own translation, by the binding genomic RNA in the 5'-UTR. At low concentration, the polyprotein would promote translation, whereas at high concentration, the polyprotein would encapsidate genomic RNA and then shut off translation. Functionally, targets the polyprotein to the plasma membrane via a multipartite membrane-binding signal, that includes its myristoylated N-terminus. Matrix protein is part of the pre-integration complex. Implicated in the release from host cell mediated by Vpu. Binds to RNA. Forms the conical core that encapsulates the genomic RNA-nucleocapsid complex in the virion. Most core are conical, with only 7% tubular. The core is constituted by capsid protein hexamer subunits. The core is disassembled soon after virion entry. Host restriction factors such as monkey TRIM5-alpha or TRIMCyp bind retroviral capsids and cause premature capsid disassembly, leading to blocks in reverse transcription. Capsid restriction by TRIM5 is one of the factors which restricts HIV-1 to the human species. Host PIN1 apparently facilitates the virion uncoating. On the other hand, interactions with PDZD8 or CYPA stabilize the capsid. In terms of biological role, encapsulates and protects viral dimeric unspliced genomic RNA (gRNA). Binds these RNAs through its zinc fingers. Acts as a nucleic acid chaperone which is involved in rearangement of nucleic acid secondary structure during gRNA retrotranscription. Also facilitates template switch leading to recombination. As part of the polyprotein, participates in gRNA dimerization, packaging, tRNA incorporation and virion assembly. Its function is as follows. Aspartyl protease that mediates proteolytic cleavages of Gag and Gag-Pol polyproteins during or shortly after the release of the virion from the plasma membrane. Cleavages take place as an ordered, step-wise cascade to yield mature proteins. This process is called maturation. Displays maximal activity during the budding process just prior to particle release from the cell. Also cleaves Nef and Vif, probably concomitantly with viral structural proteins on maturation of virus particles. Hydrolyzes host EIF4GI and PABP1 in order to shut off the capped cellular mRNA translation. The resulting inhibition of cellular protein synthesis serves to ensure maximal viral gene expression and to evade host immune response. Also mediates cleavage of host YTHDF3. Mediates cleavage of host CARD8, thereby activating the CARD8 inflammasome, leading to the clearance of latent HIV-1 in patient CD4(+) T-cells after viral reactivation; in contrast, HIV-1 can evade CARD8-sensing when its protease remains inactive in infected cells prior to viral budding. Functionally, multifunctional enzyme that converts the viral RNA genome into dsDNA in the cytoplasm, shortly after virus entry into the cell. This enzyme displays a DNA polymerase activity that can copy either DNA or RNA templates, and a ribonuclease H (RNase H) activity that cleaves the RNA strand of RNA-DNA heteroduplexes in a partially processive 3' to 5' endonucleasic mode. Conversion of viral genomic RNA into dsDNA requires many steps. A tRNA(3)-Lys binds to the primer-binding site (PBS) situated at the 5'-end of the viral RNA. RT uses the 3' end of the tRNA primer to perform a short round of RNA-dependent minus-strand DNA synthesis. The reading proceeds through the U5 region and ends after the repeated (R) region which is present at both ends of viral RNA. The portion of the RNA-DNA heteroduplex is digested by the RNase H, resulting in a ssDNA product attached to the tRNA primer. This ssDNA/tRNA hybridizes with the identical R region situated at the 3' end of viral RNA. This template exchange, known as minus-strand DNA strong stop transfer, can be either intra- or intermolecular. RT uses the 3' end of this newly synthesized short ssDNA to perform the RNA-dependent minus-strand DNA synthesis of the whole template. RNase H digests the RNA template except for two polypurine tracts (PPTs) situated at the 5'-end and near the center of the genome. It is not clear if both polymerase and RNase H activities are simultaneous. RNase H probably can proceed both in a polymerase-dependent (RNA cut into small fragments by the same RT performing DNA synthesis) and a polymerase-independent mode (cleavage of remaining RNA fragments by free RTs). Secondly, RT performs DNA-directed plus-strand DNA synthesis using the PPTs that have not been removed by RNase H as primers. PPTs and tRNA primers are then removed by RNase H. The 3' and 5' ssDNA PBS regions hybridize to form a circular dsDNA intermediate. Strand displacement synthesis by RT to the PBS and PPT ends produces a blunt ended, linear dsDNA copy of the viral genome that includes long terminal repeats (LTRs) at both ends. Catalyzes viral DNA integration into the host chromosome, by performing a series of DNA cutting and joining reactions. This enzyme activity takes place after virion entry into a cell and reverse transcription of the RNA genome in dsDNA. The first step in the integration process is 3' processing. This step requires a complex comprising the viral genome, matrix protein, Vpr and integrase. This complex is called the pre-integration complex (PIC). The integrase protein removes 2 nucleotides from each 3' end of the viral DNA, leaving recessed CA OH's at the 3' ends. In the second step, the PIC enters cell nucleus. This process is mediated through integrase and Vpr proteins, and allows the virus to infect a non dividing cell. This ability to enter the nucleus is specific of lentiviruses, other retroviruses cannot and rely on cell division to access cell chromosomes. In the third step, termed strand transfer, the integrase protein joins the previously processed 3' ends to the 5' ends of strands of target cellular DNA at the site of integration. The 5'-ends are produced by integrase-catalyzed staggered cuts, 5 bp apart. A Y-shaped, gapped, recombination intermediate results, with the 5'-ends of the viral DNA strands and the 3' ends of target DNA strands remaining unjoined, flanking a gap of 5 bp. The last step is viral DNA integration into host chromosome. This involves host DNA repair synthesis in which the 5 bp gaps between the unjoined strands are filled in and then ligated. Since this process occurs at both cuts flanking the HIV genome, a 5 bp duplication of host DNA is produced at the ends of HIV-1 integration. Alternatively, Integrase may catalyze the excision of viral DNA just after strand transfer, this is termed disintegration. This chain is Gag-Pol polyprotein (gag-pol), found in Human immunodeficiency virus type 1 group M subtype B (isolate HXB2) (HIV-1).